Reading from the N-terminus, the 371-residue chain is Chaperone protein DnaJ (371 aa).

Positions 5–70 constitute a J domain; the sequence is SYYDILGVSK…KKRQAYDQFG (66 aa). The CR-type zinc finger occupies 139 to 217; it reads GREYKIEIPR…CGGQGLQEKR (79 aa). Zn(2+) contacts are provided by Cys-152, Cys-155, Cys-169, Cys-172, Cys-191, Cys-194, Cys-205, and Cys-208. CXXCXGXG motif repeat units lie at residues 152 to 159, 169 to 176, 191 to 198, and 205 to 212; these read CGDCNGSG, CPDCGGSG, CPTCRGKG, and CKTCGGQG.

This sequence belongs to the DnaJ family. As to quaternary structure, homodimer. Zn(2+) serves as cofactor.

The protein localises to the cytoplasm. Participates actively in the response to hyperosmotic and heat shock by preventing the aggregation of stress-denatured proteins and by disaggregating proteins, also in an autonomous, DnaK-independent fashion. Unfolded proteins bind initially to DnaJ; upon interaction with the DnaJ-bound protein, DnaK hydrolyzes its bound ATP, resulting in the formation of a stable complex. GrpE releases ADP from DnaK; ATP binding to DnaK triggers the release of the substrate protein, thus completing the reaction cycle. Several rounds of ATP-dependent interactions between DnaJ, DnaK and GrpE are required for fully efficient folding. Also involved, together with DnaK and GrpE, in the DNA replication of plasmids through activation of initiation proteins. This Leptospira borgpetersenii serovar Hardjo-bovis (strain JB197) protein is Chaperone protein DnaJ.